The chain runs to 251 residues: Aspartate/glutamate leucyltransferase (251 aa).

It belongs to the R-transferase family. Bpt subfamily.

It localises to the cytoplasm. It carries out the reaction N-terminal L-glutamyl-[protein] + L-leucyl-tRNA(Leu) = N-terminal L-leucyl-L-glutamyl-[protein] + tRNA(Leu) + H(+). The enzyme catalyses N-terminal L-aspartyl-[protein] + L-leucyl-tRNA(Leu) = N-terminal L-leucyl-L-aspartyl-[protein] + tRNA(Leu) + H(+). Its function is as follows. Functions in the N-end rule pathway of protein degradation where it conjugates Leu from its aminoacyl-tRNA to the N-termini of proteins containing an N-terminal aspartate or glutamate. The sequence is that of Aspartate/glutamate leucyltransferase from Xanthomonas oryzae pv. oryzae (strain KACC10331 / KXO85).